The sequence spans 359 residues: Protein Wnt-5a (359 aa).

Residues 1 to 20 form the signal peptide; sequence MASRYLTLAAALLASFLQVD. A disulfide bond links Cys83 and Cys94. Asn93 and Asn99 each carry an N-linked (GlcNAc...) asparagine glycan. Cystine bridges form between Cys133–Cys141, Cys143–Cys161, Cys217–Cys231, Cys219–Cys226, Cys288–Cys319, Cys304–Cys314, Cys318–Cys358, Cys334–Cys349, Cys336–Cys346, and Cys341–Cys342. Ser223 carries O-palmitoleoyl serine; by PORCN lipidation. N-linked (GlcNAc...) asparagine glycans are attached at residues Asn291 and Asn305.

Belongs to the Wnt family. Palmitoleoylation is required for efficient binding to frizzled receptors. Depalmitoleoylation leads to Wnt signaling pathway inhibition.

It localises to the secreted. It is found in the extracellular space. The protein resides in the extracellular matrix. Functionally, ligand for members of the frizzled family of seven transmembrane receptors. Can activate or inhibit canonical Wnt signaling, depending on receptor context. Required during embryogenesis for extension of the primary anterior-posterior axis. This Pleurodeles waltl (Iberian ribbed newt) protein is Protein Wnt-5a (WNT5A).